The following is a 237-amino-acid chain: Protein YIPF4 (237 aa).

Over 1–106 (MQFSPTNGDF…FNRQVVRDNP (106 aa)) the chain is Cytoplasmic. The chain crosses the membrane as a helical span at residues 107-127 (DFWGPLAVVLLFSMISIYGQF). Topologically, residues 128–131 (RVVS) are lumenal. A helical transmembrane segment spans residues 132 to 152 (WIITIWIFGSLTIFLLARVLG). Residues 153-160 (GEVSYGQV) lie on the Cytoplasmic side of the membrane. The chain crosses the membrane as a helical span at residues 161 to 181 (LGVIGYSLLPLIVIAPLLLVI). Residues 182-188 (GGFEVVS) lie on the Lumenal side of the membrane. Residues 189–209 (TLIKLFGVFWAAYSAASLLVG) form a helical membrane-spanning segment. Residues 210 to 216 (DEFKTKK) lie on the Cytoplasmic side of the membrane. The helical transmembrane segment at 217–237 (PLLIYPIFLLYIYFLSLYTGV) threads the bilayer.

Belongs to the YIP1 family.

Its subcellular location is the golgi apparatus. It is found in the cis-Golgi network membrane. Its function is as follows. Involved in the maintenance of the Golgi structure. This chain is Protein YIPF4 (yipf4), found in Danio rerio (Zebrafish).